The sequence spans 766 residues: Nitrogen permease regulator 3 (766 aa).

The N-terminal stretch at 1 to 23 (MSSVVRPPDPCLVAIILITCSRA) is a signal peptide. Disordered stretches follow at residues 33–140 (PNPS…WDSF), 186–257 (RKKR…VTDG), and 594–638 (EEAK…NATP). Residues 36 to 49 (SIASAPSRSNSRTK) show a composition bias toward polar residues. Residues 51–61 (SPRASDSSPSS) show a composition bias toward low complexity. The segment covering 62 to 74 (DNEEGSSSDEDDL) has biased composition (acidic residues). Positions 89 to 110 (RRLSSGSPSTKAASQQRKSNLG) are enriched in polar residues. 2 stretches are compositionally biased toward basic and acidic residues: residues 118-133 (ETPRDGRRSERSHELE) and 217-250 (GGEKLESERDPNVDGRSDKDEEPSRSLIESHPDE).

It belongs to the NPR3 family.

Functionally, mediates inactivation of the TORC1 complex in response to amino acid starvation. Required for meiotic nuclear division. This is Nitrogen permease regulator 3 (NPR3) from Coccidioides immitis (strain RS) (Valley fever fungus).